The primary structure comprises 206 residues: High frequency lysogenization protein HflD homolog (206 aa).

Belongs to the HflD family.

The protein localises to the cytoplasm. It is found in the cell inner membrane. This Pseudomonas syringae pv. tomato (strain ATCC BAA-871 / DC3000) protein is High frequency lysogenization protein HflD homolog.